The following is a 155-amino-acid chain: Ribosomal RNA large subunit methyltransferase H (155 aa).

S-adenosyl-L-methionine contacts are provided by residues Gly104 and 123–128; that span reads LSAMTF.

The protein belongs to the RNA methyltransferase RlmH family. In terms of assembly, homodimer.

It is found in the cytoplasm. The enzyme catalyses pseudouridine(1915) in 23S rRNA + S-adenosyl-L-methionine = N(3)-methylpseudouridine(1915) in 23S rRNA + S-adenosyl-L-homocysteine + H(+). Specifically methylates the pseudouridine at position 1915 (m3Psi1915) in 23S rRNA. This chain is Ribosomal RNA large subunit methyltransferase H, found in Oleidesulfovibrio alaskensis (strain ATCC BAA-1058 / DSM 17464 / G20) (Desulfovibrio alaskensis).